The sequence spans 255 residues: Ribosomal RNA small subunit methyltransferase A (255 aa).

Residues His12, Leu14, Gly39, Glu60, Asp81, and Asn103 each coordinate S-adenosyl-L-methionine.

Belongs to the class I-like SAM-binding methyltransferase superfamily. rRNA adenine N(6)-methyltransferase family. RsmA subfamily.

Its subcellular location is the cytoplasm. It catalyses the reaction adenosine(1518)/adenosine(1519) in 16S rRNA + 4 S-adenosyl-L-methionine = N(6)-dimethyladenosine(1518)/N(6)-dimethyladenosine(1519) in 16S rRNA + 4 S-adenosyl-L-homocysteine + 4 H(+). In terms of biological role, specifically dimethylates two adjacent adenosines (A1518 and A1519) in the loop of a conserved hairpin near the 3'-end of 16S rRNA in the 30S particle. May play a critical role in biogenesis of 30S subunits. The sequence is that of Ribosomal RNA small subunit methyltransferase A from Variovorax paradoxus (strain S110).